The sequence spans 387 residues: Pepsin A-5 (387 aa).

The signal sequence occupies residues Met1–Cys15. Residues Leu16–Thr62 constitute a propeptide, activation peptide. Residues Tyr74–Ala384 enclose the Peptidase A1 domain. Asp92 is an active-site residue. 2 disulfides stabilise this stretch: Cys105-Cys110 and Cys266-Cys270. Asp275 is an active-site residue. The cysteines at positions 309 and 343 are disulfide-linked.

The protein belongs to the peptidase A1 family. In terms of tissue distribution, expressed in glandular chief cells of the neonatal stomach. Expressed in yolk sacs of the placenta (at protein level).

Its subcellular location is the secreted. It carries out the reaction Preferential cleavage: hydrophobic, preferably aromatic, residues in P1 and P1' positions. Cleaves 1-Phe-|-Val-2, 4-Gln-|-His-5, 13-Glu-|-Ala-14, 14-Ala-|-Leu-15, 15-Leu-|-Tyr-16, 16-Tyr-|-Leu-17, 23-Gly-|-Phe-24, 24-Phe-|-Phe-25 and 25-Phe-|-Tyr-26 bonds in the B chain of insulin.. Inhibited by pepstatin A. Shows particularly broad specificity; although bonds involving phenylalanine and leucine are preferred, many others are also cleaved to some extent. May play a role as a specialized neonatal digestive enzyme. The protein is Pepsin A-5 of Mus musculus (Mouse).